The sequence spans 238 residues: Enoyl-CoA delta isomerase 3 (238 aa).

This sequence belongs to the enoyl-CoA hydratase/isomerase family.

The protein resides in the cytoplasm. It is found in the nucleus. The enzyme catalyses a (3Z)-enoyl-CoA = a 4-saturated (2E)-enoyl-CoA. It catalyses the reaction a (3E)-enoyl-CoA = a 4-saturated (2E)-enoyl-CoA. It functions in the pathway lipid metabolism; fatty acid beta-oxidation. Functionally, able to isomerize both 3-cis and 3-trans double bonds into the 2-trans form in a range of enoyl-CoA species. Essential for the beta oxidation of unsaturated fatty acids. The sequence is that of Enoyl-CoA delta isomerase 3 from Arabidopsis thaliana (Mouse-ear cress).